A 449-amino-acid chain; its full sequence is MTAASQISMSARHLGYTRGGPDVPVESLKITNELLQKNHDELHIFFRDMNGHNHLVHNLFTRLALGATPEQLRTAFNDDLPTQRGIPSLDQDVVDKMHDDDFFSERITKINHYNNFMVFFEKEIASKGWQTVVNQYIFSKSRVAEALLPLMYDGAYHPIIHLGLGVEFEQPAVIAEALAQAAAHDSFDTDWFFQSAEQGALESQSGASPSSSESTLLELARETAQDNTIRDAARTPGLIGTMKMKKAIYPKAGKQLLSLASRFRVTKETLKQKTAEMVNFCAYLAGCAQRRDRATKVDFFFMHCVTSSLCLSVLAQQPWIDIADRVRLIEWKGRLDLAWYVTCGVPDLDLDHVKTYQAGVERGWDDIFALVSDQHDDGHVAKFVRALKHGEDICQQFEDGDASKAFPIRGDMWQVIARMAYDSTLNLPPPAKWVIMAGMDQAWVSVPEK.

It belongs to the questin oxidase family.

It participates in secondary metabolite biosynthesis. Its function is as follows. Baeyer-Villiger oxidase; part of the gene cluster that mediates the biosynthesis of dibenzodioxocinones such as pestalotiollide B, a novel class of inhibitors against cholesterol ester transfer protein (CEPT). The biosynthesis initiates from condensation of acetate and malonate units catalyzed by the non-reducing PKS pks8/GME11356. Pks8/GME11356 lacks a thioesterase (TE) domain, which is important to the cyclizing of the third ring of atrochrysone carboxylic acid, and the esterase GME11355 might play the role of TE and catalyzes the cyclization reaction of the C ring. The lactamase-like protein GME11357 (or other beta-lactamases in Pestalotiopsis microspora) probably hydrolyzes the thioester bond between the ACP of pks8/GME11356 and the intermediate to release atrochrysone carboxylic acid, which is spontaneously dehydrates to form endocrocin anthrone. Endocrocin anthrone is further converted to emodin via the endocrocin intermediate. Emodin is then oxidized by several enzymes such as the Baeyer-Villiger oxidase GME11358, the oxidoreductase GME11367, the short chain dehydrogenase/reductase GME11373, as well as by other oxidoreductases from the cluster, to modify the A and C rings and open the B ring, and finally yield monodictyphenone. The prenyltransferase GME11375 may catalyze the addition reaction between the C5 side chains and the carbon bone of dibenzodioxocinones. The remaining biochemical reactions to the final product dibenzodioxocinones should be methylation catalyzed by methyltransferase GME11366 and reduction and lactonization reaction catalyzed by a series of oxidordeuctases. The polypeptide is Baeyer-Villiger oxidase GME11358 (Pestalotiopsis microspora).